Reading from the N-terminus, the 500-residue chain is Cytochrome P450 11B1, mitochondrial (500 aa).

A mitochondrion-targeting transit peptide spans 1-24 (MAFRLKSDVRLAGSWLCLRGARAL). Cys-447 contributes to the heme binding site.

The protein belongs to the cytochrome P450 family. It depends on heme as a cofactor.

The protein resides in the mitochondrion inner membrane. It catalyses the reaction a steroid + 2 reduced [adrenodoxin] + O2 + 2 H(+) = an 11beta-hydroxysteroid + 2 oxidized [adrenodoxin] + H2O. The enzyme catalyses 11-deoxycortisol + 2 reduced [adrenodoxin] + O2 + 2 H(+) = cortisol + 2 oxidized [adrenodoxin] + H2O. It carries out the reaction 21-hydroxyprogesterone + 2 reduced [adrenodoxin] + O2 + 2 H(+) = corticosterone + 2 oxidized [adrenodoxin] + H2O. The catalysed reaction is 21-hydroxyprogesterone + 2 reduced [adrenodoxin] + O2 + 2 H(+) = 18-hydroxy-11-deoxycorticosterone + 2 oxidized [adrenodoxin] + H2O. It catalyses the reaction 21-hydroxyprogesterone + 2 reduced [adrenodoxin] + O2 + 2 H(+) = 19-hydroxy-11-deoxycorticosterone + 2 oxidized [adrenodoxin] + H2O. The enzyme catalyses cortisol + 2 reduced [adrenodoxin] + O2 + 2 H(+) = 18-hydroxycortisol + 2 oxidized [adrenodoxin] + H2O. It carries out the reaction 11-deoxycortisol + 2 reduced [adrenodoxin] + O2 + 2 H(+) = 18-hydroxy-11-deoxycortisol + 2 oxidized [adrenodoxin] + H2O. Its pathway is steroid biosynthesis; glucocorticoid biosynthesis. It participates in steroid hormone biosynthesis. In terms of biological role, a cytochrome P450 monooxygenase involved in the biosynthesis of adrenal corticoids. Catalyzes a variety of reactions that are essential for many species, including detoxification, defense, and the formation of endogenous chemicals like steroid hormones. Steroid 11beta, 18- and 19-hydroxylase with preferred regioselectivity at 11beta, then 18, and lastly 19. Catalyzes the hydroxylation of 11-deoxycortisol and 11-deoxycorticosterone (21-hydroxyprogesterone) at 11beta position, yielding cortisol or corticosterone, respectively, but cannot produce aldosterone. Mechanistically, uses molecular oxygen inserting one oxygen atom into a substrate for hydroxylation and reducing the second into a water molecule. Two electrons are provided by NADPH via a two-protein mitochondrial transfer system comprising flavoprotein FDXR (adrenodoxin/ferredoxin reductase) and nonheme iron-sulfur protein FDX1 or FDX2 (adrenodoxin/ferredoxin). Due to its lack of 18-oxidation activity, it is incapable of generating aldosterone. Could also be involved in the androgen metabolic pathway. The chain is Cytochrome P450 11B1, mitochondrial (CYP11B1) from Cavia porcellus (Guinea pig).